The following is a 373-amino-acid chain: 3-dehydroquinate synthase (373 aa).

NAD(+) is bound by residues 67–72 (EGEETK), 101–105 (GVILD), 125–126 (TT), Lys138, and Lys147. The Zn(2+) site is built by Glu180, His240, and His256.

It belongs to the sugar phosphate cyclases superfamily. Dehydroquinate synthase family. NAD(+) serves as cofactor. The cofactor is Co(2+). It depends on Zn(2+) as a cofactor.

The protein localises to the cytoplasm. The enzyme catalyses 7-phospho-2-dehydro-3-deoxy-D-arabino-heptonate = 3-dehydroquinate + phosphate. The protein operates within metabolic intermediate biosynthesis; chorismate biosynthesis; chorismate from D-erythrose 4-phosphate and phosphoenolpyruvate: step 2/7. Catalyzes the conversion of 3-deoxy-D-arabino-heptulosonate 7-phosphate (DAHP) to dehydroquinate (DHQ). This chain is 3-dehydroquinate synthase, found in Chlamydia trachomatis serovar A (strain ATCC VR-571B / DSM 19440 / HAR-13).